A 65-amino-acid chain; its full sequence is Hirudin-3B (65 aa).

An interaction with thrombin active site region spans residues 1 to 3 (VVY). Cystine bridges form between C6/C14, C16/C28, and C22/C39. The tract at residues 40-65 (VTGEGTPKPQSHNDGDFEEIPEEYLQ) is disordered. O-linked (GalNAc...) threonine glycosylation is present at T45. The tract at residues 55-65 (DFEEIPEEYLQ) is interaction with fibrinogen-binding exosite of thrombin. Positions 55–65 (DFEEIPEEYLQ) are enriched in acidic residues. Sulfotyrosine is present on Y63.

This sequence belongs to the protease inhibitor I14 (hirudin) family.

It is found in the secreted. In terms of biological role, hirudin is a potent thrombin-specific protease inhibitor. It forms a stable non-covalent complex with alpha-thrombin, thereby abolishing its ability to cleave fibrinogen. The protein is Hirudin-3B of Hirudo medicinalis (Medicinal leech).